Here is a 268-residue protein sequence, read N- to C-terminus: Large ribosomal subunit protein mL46 (268 aa).

A mitochondrion-targeting transit peptide spans 1 to 25 (MYLKRNIINMQRSFSRQFHISVRNS).

The protein belongs to the mitochondrion-specific ribosomal protein mL46 family. In terms of assembly, component of the mitochondrial large ribosomal subunit (mt-LSU). Mature yeast 74S mitochondrial ribosomes consist of a small (37S) and a large (54S) subunit. The 37S small subunit contains a 15S ribosomal RNA (15S mt-rRNA) and at least 32 different proteins. The 54S large subunit contains a 21S rRNA (21S mt-rRNA) and at least 45 different proteins.

Its subcellular location is the mitochondrion. In terms of biological role, component of the mitochondrial ribosome (mitoribosome), a dedicated translation machinery responsible for the synthesis of mitochondrial genome-encoded proteins, including at least some of the essential transmembrane subunits of the mitochondrial respiratory chain. The mitoribosomes are attached to the mitochondrial inner membrane and translation products are cotranslationally integrated into the membrane. This chain is Large ribosomal subunit protein mL46 (mrpl17), found in Schizosaccharomyces pombe (strain 972 / ATCC 24843) (Fission yeast).